We begin with the raw amino-acid sequence, 504 residues long: Maturase K (504 aa).

Belongs to the intron maturase 2 family. MatK subfamily.

It is found in the plastid. It localises to the chloroplast. Its function is as follows. Usually encoded in the trnK tRNA gene intron. Probably assists in splicing its own and other chloroplast group II introns. This Nepenthes gracilis (Slender pitcher plant) protein is Maturase K.